Here is a 458-residue protein sequence, read N- to C-terminus: Preferentially expressed antigen in melanoma-like protein 1 (458 aa).

The LRR 1; degenerate repeat unit spans residues 99–126 (RCKLQVLDLRVMPLKLWNRLPVFGTAGC). One copy of the LRR 2; degenerate repeat lies at 176 to 200 (SLCCCKLQIWAMSMYYHRKLLEILD). The LRR 3; degenerate repeat unit spans residues 201 to 227 (LDSVQELRMYCISNPVCLLNFAPYLGR). One copy of the LRR 4; degenerate repeat lies at 228–263 (MRNLRCLILSHLWQTFSMTPVEKQQVITQFTSQFLK). LRR repeat units lie at residues 264–289 (LKCLQILHLDTVFFLEGHLDELFWWL), 290–321 (KTPLETLSVIDCNLSKSDWFHISEFQCTSQLK), 322–340 (HLNLKWVKLTHLSPEPLRV), 346–373 (ASTLTSLDLEGCQMMDSQLSAILPALRC), and 374–398 (CTQLTKFNFHGNYISMPILRELAYN).

Belongs to the PRAME family. In terms of tissue distribution, specifically expressed in testis (at protein level).

It is found in the cytoplasm. Its subcellular location is the cytoplasmic vesicle. The protein resides in the secretory vesicle. The protein localises to the acrosome. It localises to the cell projection. It is found in the cilium. Its subcellular location is the flagellum. May play a role in acrosome development and also in sperm maturation and motility. This is Preferentially expressed antigen in melanoma-like protein 1 from Mus musculus (Mouse).